A 494-amino-acid polypeptide reads, in one-letter code: Probable malate:quinone oxidoreductase (494 aa).

It belongs to the MQO family. FAD serves as cofactor.

The catalysed reaction is (S)-malate + a quinone = a quinol + oxaloacetate. It functions in the pathway carbohydrate metabolism; tricarboxylic acid cycle; oxaloacetate from (S)-malate (quinone route): step 1/1. This chain is Probable malate:quinone oxidoreductase, found in Kocuria rhizophila (strain ATCC 9341 / DSM 348 / NBRC 103217 / DC2201).